The following is a 1076-amino-acid chain: Hormone-sensitive lipase (1076 aa).

2 stretches are compositionally biased toward polar residues: residues 1–12 and 38–64; these read MEPGSKSVSRSD and ESKTLQGSNTQQKPASNQRPLTQQETP. Disordered stretches follow at residues 1–198 and 229–250; these read MEPG…KSKQ and VTDSESESDVGSSSDTDSPATM. Over residues 65-77 the composition is skewed to basic and acidic residues; that stretch reads AQHDAESQKEPRA. Polar residues predominate over residues 94–116; the sequence is APQQSPYIQRVLLTQQEAASQQG. Residues 140–149 are compositionally biased toward pro residues; sequence GPGPGEPPPA. The span at 150-161 shows a compositional bias: low complexity; the sequence is QQEAESTPAAQA. The segment covering 172–198 has biased composition (polar residues); sequence PTESTSQETPEQSDKQTTPVQGAKSKQ. Residues 237 to 246 show a composition bias toward low complexity; it reads DVGSSSDTDS. The Involved in the stabilization of the negatively charged intermediate by the formation of the oxyanion hole signature appears at 651–653; the sequence is HGG. Ser725 is an active-site residue. The disordered stretch occupies residues 838-930; it reads KSQKMSEPIA…EAEAKNELSP (93 aa). Ser853 bears the Phosphoserine mark. Ser855 bears the Phosphoserine; by AMPK mark. Over residues 882–908 the composition is skewed to polar residues; that stretch reads RGNSETSSDTPEMSLSAETLSPSTPSD. Phosphoserine is present on residues Ser897, Ser929, Ser950, and Ser951. Residues Asp994 and His1024 contribute to the active site. Positions 1055–1076 are disordered; sequence AGAGPSGETGAAGVDGGCGGRH. The segment covering 1067–1076 has biased composition (gly residues); the sequence is GVDGGCGGRH.

It belongs to the 'GDXG' lipolytic enzyme family. In terms of assembly, monomer and homodimer. Interacts with CAVIN1 in the adipocyte cytoplasm. Interacts with PLIN5. Phosphorylation by AMPK reduces its translocation towards the lipid droplets. In terms of tissue distribution, testis.

It localises to the cell membrane. It is found in the membrane. The protein resides in the caveola. Its subcellular location is the cytoplasm. The protein localises to the cytosol. It localises to the lipid droplet. It catalyses the reaction a diacylglycerol + H2O = a monoacylglycerol + a fatty acid + H(+). The catalysed reaction is a triacylglycerol + H2O = a diacylglycerol + a fatty acid + H(+). The enzyme catalyses a monoacylglycerol + H2O = glycerol + a fatty acid + H(+). It carries out the reaction Hydrolyzes glycerol monoesters of long-chain fatty acids.. It catalyses the reaction 1,2-di-(9Z-octadecenoyl)-glycerol + (9Z)-octadecenoate + H(+) = 1,2,3-tri-(9Z-octadecenoyl)-glycerol + H2O. The catalysed reaction is 2,3-di-(9Z)-octadecenoyl-sn-glycerol + H2O = 2-(9Z-octadecenoyl)-glycerol + (9Z)-octadecenoate + H(+). The enzyme catalyses cholesteryl (9Z-octadecenoate) + H2O = cholesterol + (9Z)-octadecenoate + H(+). It carries out the reaction 1,2,3-tri-(9Z-octadecenoyl)-glycerol + H2O = di-(9Z)-octadecenoylglycerol + (9Z)-octadecenoate + H(+). It catalyses the reaction all-trans-retinyl hexadecanoate + H2O = all-trans-retinol + hexadecanoate + H(+). The catalysed reaction is 1,2-di-(9Z-octadecenoyl)-glycerol + H2O = (9Z-octadecenoyl)-glycerol + (9Z)-octadecenoate + H(+). The enzyme catalyses 2-(5Z,8Z,11Z,14Z-eicosatetraenoyl)-glycerol + H2O = glycerol + (5Z,8Z,11Z,14Z)-eicosatetraenoate + H(+). It carries out the reaction 1-(9Z-octadecenoyl)-glycerol + H2O = glycerol + (9Z)-octadecenoate + H(+). It catalyses the reaction 2-(9Z-octadecenoyl)-glycerol + H2O = glycerol + (9Z)-octadecenoate + H(+). The catalysed reaction is 1-O-hexadecyl-2-acetyl-sn-glycerol + H2O = 1-O-hexadecyl-sn-glycerol + acetate + H(+). The enzyme catalyses 1,2-di-(9Z-octadecenoyl)-sn-glycerol + H2O = (9Z-octadecenoyl)-glycerol + (9Z)-octadecenoate + H(+). It carries out the reaction 1,3-di-(9Z-octadecenoyl)-glycerol + H2O = 1-(9Z-octadecenoyl)-glycerol + (9Z)-octadecenoate + H(+). It catalyses the reaction 1,2-di-(9Z-octadecenoyl)-glycerol + H2O = 2-(9Z-octadecenoyl)-glycerol + (9Z)-octadecenoate + H(+). It functions in the pathway glycerolipid metabolism; triacylglycerol degradation. Its activity is regulated as follows. Retinyl ester hydrolase is inhibited by bis-p-nitrophenyl phosphate. In terms of biological role, lipase with broad substrate specificity, catalyzing the hydrolysis of triacylglycerols (TAGs), diacylglycerols (DAGs), monoacylglycerols (MAGs), cholesteryl esters and retinyl esters. Shows a preferential hydrolysis of DAGs over TAGs and MAGs and preferentially hydrolyzes the fatty acid (FA) esters at the sn-3 position of the glycerol backbone in DAGs. Preferentially hydrolyzes FA esters at the sn-1 and sn-2 positions of the glycerol backbone in TAGs. Catalyzes the hydrolysis of 2-arachidonoylglycerol, an endocannabinoid and of 2-acetyl monoalkylglycerol ether, the penultimate precursor of the pathway for de novo synthesis of platelet-activating factor. In adipose tissue and heart, it primarily hydrolyzes stored triglycerides to free fatty acids, while in steroidogenic tissues, it principally converts cholesteryl esters to free cholesterol for steroid hormone production. The protein is Hormone-sensitive lipase (LIPE) of Homo sapiens (Human).